Reading from the N-terminus, the 505-residue chain is L-amino-acid oxidase (505 aa).

Residues 1 to 18 form the signal peptide; it reads MNVFLMFSLLFLAALGSC. Residues C28 and C191 are joined by a disulfide bond. Residues 61-62, 81-82, R89, and 105-108 contribute to the FAD site; these read MS, EA, and GPMR. Substrate is bound at residue R108. The N-linked (GlcNAc...) asparagine glycan is linked to N190. Residue H241 participates in substrate binding. V279 is a binding site for FAD. A disulfide bridge links C349 with C430. N379 carries an N-linked (GlcNAc...) asparagine glycan. Y390 lines the substrate pocket. Residues E475 and 482 to 487 each bind FAD; that span reads GWIDST. 482 to 483 lines the substrate pocket; it reads GW.

It belongs to the flavin monoamine oxidase family. FIG1 subfamily. As to quaternary structure, monomer. This is in contrast with most of its orthologs, that are non-covalently linked homodimers. It depends on FAD as a cofactor. N-glycosylated. Expressed by the venom gland.

It is found in the secreted. It carries out the reaction an L-alpha-amino acid + O2 + H2O = a 2-oxocarboxylate + H2O2 + NH4(+). It catalyses the reaction L-leucine + O2 + H2O = 4-methyl-2-oxopentanoate + H2O2 + NH4(+). Catalyzes an oxidative deamination of predominantly hydrophobic and aromatic L-amino acids, thus producing hydrogen peroxide that may contribute to the diverse toxic effects of this enzyme. Shows activity on L-Leu. Exhibits diverse biological activities, such as hemorrhage, edema, antibacterial and antiparasitic activities, as well as regulation of platelet aggregation. Effects of snake L-amino oxidases on platelets are controversial, since they either induce aggregation or inhibit agonist-induced aggregation. These different effects are probably due to different experimental conditions. This protein has an ability to induce hemolysis and apoptosis. The protein is L-amino-acid oxidase of Protobothrops flavoviridis (Habu).